The sequence spans 780 residues: Protein AMEIOTIC 1 (780 aa).

Disordered regions lie at residues 32-60 (KKKT…SPLS) and 237-327 (APKE…RWSA). Over residues 50 to 60 (DSTIQPRSPLS) the composition is skewed to polar residues. 2 stretches are compositionally biased toward basic and acidic residues: residues 263–291 (EVKR…EGKK) and 309–327 (RTVE…RWSA). Positions 448 to 547 (VEELTEEVNG…LEEQVTYLSS (100 aa)) form a coiled coil.

Its subcellular location is the nucleus. The protein localises to the chromosome. Functionally, plays a fundamental role in building the proper chromosome structure at the beginning of meiosis in male meiocytes. Required for the transition from leptotene to zygotene in meiocytes. Required for homologous chromosome pairing, and initiation and progression of meiotic recombination. Regulates meiocyte cytoskeleton organization. The polypeptide is Protein AMEIOTIC 1 (Zea mays (Maize)).